The sequence spans 975 residues: Nesprin-3 (975 aa).

Topologically, residues 1–925 are cytoplasmic; that stretch reads MTQQPQDDFD…LGSLFRRACC (925 aa). The Spectrin 1 repeat unit spans residues 220–325; sequence REHEEYQAGV…WEEEEERLRG (106 aa). Residues 617-645 are a coiled coil; it reads NHQHKMDQLSSDFQALQRSLEDLVDRCRQ. The Spectrin 2 repeat unit spans residues 647 to 740; sequence VQEHCTFSHQ…RELAESWRAL (94 aa). The region spanning 917–975 is the KASH domain; the sequence is GSLFRRACCVALPLQLLLLLFLLLLFLLPIREEDRSCTLANNFARSFTLMLRYNGPPPT. A helical; Anchor for type IV membrane protein transmembrane segment spans residues 926–946; it reads VALPLQLLLLLFLLLLFLLPI. At 947–975 the chain is on the perinuclear space side; that stretch reads REEDRSCTLANNFARSFTLMLRYNGPPPT.

The protein belongs to the nesprin family. Core component of LINC complexes which are composed of inner nuclear membrane SUN domain-containing proteins coupled to outer nuclear membrane KASH domain-containing nesprins. SUN and KASH domain-containing proteins seem to bind each other promiscuously; however, differentially expression of LINC complex constituents can give rise to specific assemblies. Interacts with SUN1 and SUN2; probably forming respective LINC complexes. Interacts with PLEC (via actin-binding domain). Interacts with DST. Interacts with SYNE1 via spectrin repeats. Interacts (via KASH domain) with TOR1A (ATP-bound); the interaction is required for SYNE3 nuclear envelope localization. In terms of processing, the disulfid bond with SUN1 or SUN2 is required for stability of the respective LINC complex under tensile forces. As to expression, expressed in aortic endothelial cells (at protein level).

The protein resides in the nucleus outer membrane. The protein localises to the nucleus envelope. It localises to the rough endoplasmic reticulum. As a component of the LINC (LInker of Nucleoskeleton and Cytoskeleton) complex involved in the connection between the nuclear lamina and the cytoskeleton. The nucleocytoplasmic interactions established by the LINC complex play an important role in the transmission of mechanical forces across the nuclear envelope and in nuclear movement and positioning. Probable anchoring protein which tethers the nucleus to the cytoskeleton by binding PLEC which can associate with the intermediate filament system. Plays a role in the regulation of aortic epithelial cell morphology, and is required for flow-induced centrosome polarization and directional migration in aortic endothelial cells. The protein is Nesprin-3 of Homo sapiens (Human).